Here is a 1310-residue protein sequence, read N- to C-terminus: MEPPPPLLLLPLALLALLWGGERGAAALPAGCKHDGRARGTGRAAAAAEGKVVCSSLELAQVLPPDTLPNRTVTLILSNNKISELKNGSFSGLSLLERLDLRNNLISRIAPGAFWGLSSLKRLDLTNNRIGCLNADVFRGLTNLVRLNLSGNLFTSLSQGTFDYLGSLRSLEFQTEYLLCDCNILWMHRWVKERNITVRDTRCVYPKSLQAQPVTGVKQELLTCDPPLELPSFYMTPSHRQVVFEGDSLPFQCMASYIDQDMQVLWYQDGRIVETDESQGIFVEKSMIHNCSLIASALTISNIQAGSTGNWGCHVQTKRGNNTRTVDIVVLESSAQYCPPERVVNNKGDFRWPRTLAGITAYLQCTRNTHSSGIYPGSAQDERKAWRRCDRGGFWADDDYSRCQYANDVTRVLYMFNQMPLNLTNAVATARQLLAYTVEAANFSDKMDVIFVAEMIEKFGRFTREEKSKELGDVMVDVASNIMLADERVLWLAQREAKACSRIVQCLQRIATHRLASGAHVYSTYSPNIALEAYVIKAAGFTGMTCSVFQKVAASDRAGLSDYGRRDPDGNLDKQLSFKCNVSSTFSSLALKNTIMEASIQLPSSLLSPKHKREARAADDALYKLQLIAFRNGKLFPATGNSTKLADDGKRRTVVTPVILTKIDGATVDTHHIPVNVTLRRIAHGADAVAAQWDFDLLNGQGGWKSDGCCILYSDENITTIQCGSLGNYAVLMDLTGTELYTPAASLLHPVVYTTAITLLLCLLAVIISYMYHHSLIRISLKSWHMLVNLCFHILLTCVVFVGGITQTRNASVCQAVGIILHYSTLATVLWVGVTARNIYKQVTKKAKRCQDPDEPPAPPRPMLRFYLIGGGIPIIVCGITAAANIKNYGSRPSAPYCWMAWEPSLGAFYGPASFITFVNCMYFLSIFIQLKRHPERKYELKEPTEEQQRLAANENGEINHQDSMSLSLISTSTLENEHSFQSQLLGASLTLLLYVILWMFGAMAVSLYYPLDLVFSFFFGATCLSFSAFMMVHHCINREDVRLAWIMMCCPGRSSYSVQVNVQPPNSSATNGEAPKCTNSSAESSCTNKSASSFKNSSQGCKLTNLQAAAAQYHSNALPVNATPQLDNSLTEHSMDNDIKMHVAPLDVQFRTNVHPSRHHKNRSKGHRASRLTVLREYAYDVPTSVEGSVQNGLPKSRPGSNEGHSRSRRAYLAYRERQYNPPQQDSSDACSTLPKSSRNVEKPVSTSSKKDAPRKPAAADLESQQKSYGLNLAVQNGPVKSNGQEGPLLATDVTGNVRTGLWKHETTV.

Positions M1 to A27 are cleaved as a signal peptide. One can recognise an LRRNT domain in the interval L28–N70. Topologically, residues L28 to L747 are extracellular. N70 and N87 each carry an N-linked (GlcNAc...) asparagine glycan. LRR repeat units lie at residues R71–G92, L95–G116, S119–G140, and N143–Y164. 10 N-linked (GlcNAc...) asparagine glycosylation sites follow: N148, N195, N290, N321, N422, N442, N581, N641, N676, and N717. The LRRCT domain occupies E176 to P226. The 99-residue stretch at P231–V329 folds into the Ig-like domain. A disulfide bridge links C253 with C313. Residues L572–E739 enclose the GAIN-B domain. The tract at residues A690–E739 is GPS. C709 and C723 form a disulfide bridge. A helical transmembrane segment spans residues L748 to I768. Residues S769 to H785 lie on the Cytoplasmic side of the membrane. A helical transmembrane segment spans residues M786–T806. Topologically, residues Q807–Q815 are extracellular. An N-linked (GlcNAc...) asparagine glycan is attached at N810. Residues A816–A836 form a helical membrane-spanning segment. At R837–R865 the chain is on the cytoplasmic side. Residues F866–I886 form a helical membrane-spanning segment. The Extracellular segment spans residues K887–A908. Residues F909–I929 traverse the membrane as a helical segment. The Cytoplasmic segment spans residues Q930 to L985. The helical transmembrane segment at L986–V1006 threads the bilayer. Residues S1007 to D1013 lie on the Extracellular side of the membrane. The chain crosses the membrane as a helical span at residues L1014–H1034. The Cytoplasmic segment spans residues H1035 to V1310. Disordered regions lie at residues P1065–E1084, V1187–R1208, and Y1221–E1264. Residues N1222–S1239 show a composition bias toward polar residues. A PDZ-binding motif is present at residues T1308–V1310.

Belongs to the G-protein coupled receptor 2 family. Adhesion G-protein coupled receptor (ADGR) subfamily. In terms of assembly, interacts (via PDZ-binding motif) with DLG1. As to expression, expressed by spermatogonial progenitor cells located within the outer cell layer of the seminiferous tubule and by multipotent adult spermatogonial-derived stem cells.

It localises to the membrane. Orphan receptor that may have a role in planar cell polarity pathway. In Mus musculus (Mouse), this protein is Adhesion G protein-coupled receptor A3 (Adgra3).